A 267-amino-acid polypeptide reads, in one-letter code: MLHVSMVGCGAIGQGVLELLKSDPDVCFDAVIVPEHAMDKAREAIAPFAPNARVTTHLSADAHTDLLVECAGHDALEEHVLPALEQGIDCLVVSVGALSQPGVAERLEAAARRGNAQVQLLSGAIGAIDALAAARVGGLDAVIYTGRKPPRAWKDTPAEQQFDLDALREPTVIFEGNAREAARLFPKNANVAATLSLAGLGLEHTHVKLLADPTVDENIHHVEARGAFGGFELTMRGKPLAANPKTSALTVFSVVRALGNRAHAVSI.

Residues Ala124 and Asn190 each coordinate NAD(+). His220 is a catalytic residue.

It belongs to the L-aspartate dehydrogenase family.

It catalyses the reaction L-aspartate + NADP(+) + H2O = oxaloacetate + NH4(+) + NADPH + H(+). It carries out the reaction L-aspartate + NAD(+) + H2O = oxaloacetate + NH4(+) + NADH + H(+). The protein operates within cofactor biosynthesis; NAD(+) biosynthesis; iminoaspartate from L-aspartate (dehydrogenase route): step 1/1. Its function is as follows. Specifically catalyzes the NAD or NADP-dependent dehydrogenation of L-aspartate to iminoaspartate. This Ralstonia pickettii (strain 12J) protein is L-aspartate dehydrogenase.